Here is a 122-residue protein sequence, read N- to C-terminus: Large ribosomal subunit protein uL18 (122 aa).

It belongs to the universal ribosomal protein uL18 family. Part of the 50S ribosomal subunit; part of the 5S rRNA/L5/L18/L25 subcomplex. Contacts the 5S and 23S rRNAs.

Its function is as follows. This is one of the proteins that bind and probably mediate the attachment of the 5S RNA into the large ribosomal subunit, where it forms part of the central protuberance. This is Large ribosomal subunit protein uL18 from Pseudothermotoga lettingae (strain ATCC BAA-301 / DSM 14385 / NBRC 107922 / TMO) (Thermotoga lettingae).